The chain runs to 122 residues: Large ribosomal subunit protein uL14 (122 aa).

This sequence belongs to the universal ribosomal protein uL14 family. As to quaternary structure, part of the 50S ribosomal subunit. Forms a cluster with proteins L3 and L19. In the 70S ribosome, L14 and L19 interact and together make contacts with the 16S rRNA in bridges B5 and B8.

Binds to 23S rRNA. Forms part of two intersubunit bridges in the 70S ribosome. The chain is Large ribosomal subunit protein uL14 from Nitrobacter winogradskyi (strain ATCC 25391 / DSM 10237 / CIP 104748 / NCIMB 11846 / Nb-255).